The sequence spans 361 residues: 5-formaminoimidazole-4-carboxamide-1-(beta)-D-ribofuranosyl 5'-monophosphate synthetase (361 aa).

Residues His27 and Ser94 each coordinate 5-amino-1-(5-phospho-beta-D-ribosyl)imidazole-4-carboxamide. The region spanning 116-348 (RAILRWEAER…MGQRIAKEIK (233 aa)) is the ATP-grasp domain. ATP-binding positions include 146–208 (PDDI…ANYC) and Glu230. Asn258 provides a ligand contact to 5-amino-1-(5-phospho-beta-D-ribosyl)imidazole-4-carboxamide. 2 residues coordinate Mg(2+): Gln297 and Glu310.

The protein belongs to the phosphohexose mutase family. Mg(2+) serves as cofactor. Requires Mn(2+) as cofactor.

It carries out the reaction 5-amino-1-(5-phospho-beta-D-ribosyl)imidazole-4-carboxamide + formate + ATP = 5-formamido-1-(5-phospho-D-ribosyl)imidazole-4-carboxamide + ADP + phosphate. It participates in purine metabolism; IMP biosynthesis via de novo pathway; 5-formamido-1-(5-phospho-D-ribosyl)imidazole-4-carboxamide from 5-amino-1-(5-phospho-D-ribosyl)imidazole-4-carboxamide (formate route): step 1/1. In terms of biological role, catalyzes the ATP- and formate-dependent formylation of 5-aminoimidazole-4-carboxamide-1-beta-d-ribofuranosyl 5'-monophosphate (AICAR) to 5-formaminoimidazole-4-carboxamide-1-beta-d-ribofuranosyl 5'-monophosphate (FAICAR) in the absence of folates. The polypeptide is 5-formaminoimidazole-4-carboxamide-1-(beta)-D-ribofuranosyl 5'-monophosphate synthetase (Methanococcus maripaludis (strain C5 / ATCC BAA-1333)).